We begin with the raw amino-acid sequence, 470 residues long: Aminoacyl transferase sphA (470 aa).

Residues Ser-212, His-244, and Thr-272 each contribute to the pyridoxal 5'-phosphate site. N6-(pyridoxal phosphate)lysine is present on Lys-275.

It belongs to the class-II pyridoxal-phosphate-dependent aminotransferase family. BioF subfamily. In terms of assembly, homodimer. Pyridoxal 5'-phosphate is required as a cofactor.

The protein operates within secondary metabolite biosynthesis. Aminoacyl transferase; part of the gene cluster that mediates the biosynthesis of sphingofungins, bioactive molecules acting as sphingolipid inhibitors via inhibiting serine palmitoyl transferase (SPT). Within the pathway, sphA transfers 2-methyl-aminomalonate and 2-hydroxymethyl-aminomalonate onto the sphB product 3-hydroxyoctadeca-4,10-dienoyl-ACP to produce the precursors of sphingofungins E and F. The substrate specificity of sphA using 2-methyl-aminomalonate and 2-hydroxymethyl-aminomalonate instread of aminomalonate is responsible for the biosynthesis of sphingofungins E and F but not B and C like in Aspergillus fumigatus. The PKS sphB does not contain any putative thioesterase domain for releasing the nascent polyketide chain and it has been suggested that aminoacyl transferases can facilitate the polyketide chain release. This Byssochlamys spectabilis (Paecilomyces variotii) protein is Aminoacyl transferase sphA.